A 461-amino-acid polypeptide reads, in one-letter code: Glycine--tRNA ligase (461 aa).

Residues R100 and E163 each contribute to the substrate site. ATP contacts are provided by residues 195-197, 205-210, 282-283, and 326-329; these read RNE, FRTREF, EL, and GLGR. 210-214 contributes to the substrate binding site; sequence FEQME. 322-326 lines the substrate pocket; the sequence is EPAAG.

The protein belongs to the class-II aminoacyl-tRNA synthetase family. Homodimer.

The protein resides in the cytoplasm. The catalysed reaction is tRNA(Gly) + glycine + ATP = glycyl-tRNA(Gly) + AMP + diphosphate. Catalyzes the attachment of glycine to tRNA(Gly). This Corynebacterium glutamicum (strain ATCC 13032 / DSM 20300 / JCM 1318 / BCRC 11384 / CCUG 27702 / LMG 3730 / NBRC 12168 / NCIMB 10025 / NRRL B-2784 / 534) protein is Glycine--tRNA ligase.